A 503-amino-acid polypeptide reads, in one-letter code: ATP synthase subunit alpha (503 aa).

Position 170 to 177 (170 to 177 (GDKQTGKT)) interacts with ATP.

The protein belongs to the ATPase alpha/beta chains family. As to quaternary structure, F-type ATPases have 2 components, CF(1) - the catalytic core - and CF(0) - the membrane proton channel. CF(1) has five subunits: alpha(3), beta(3), gamma(1), delta(1), epsilon(1). CF(0) has three main subunits: a(1), b(2) and c(9-12). The alpha and beta chains form an alternating ring which encloses part of the gamma chain. CF(1) is attached to CF(0) by a central stalk formed by the gamma and epsilon chains, while a peripheral stalk is formed by the delta and b chains.

Its subcellular location is the cell inner membrane. The catalysed reaction is ATP + H2O + 4 H(+)(in) = ADP + phosphate + 5 H(+)(out). Functionally, produces ATP from ADP in the presence of a proton gradient across the membrane. The alpha chain is a regulatory subunit. The sequence is that of ATP synthase subunit alpha from Helicobacter pylori (strain J99 / ATCC 700824) (Campylobacter pylori J99).